We begin with the raw amino-acid sequence, 410 residues long: Phosphopentomutase (410 aa).

Mn(2+) is bound by residues Asp10, Asp309, His314, Asp350, His351, and His362.

The protein belongs to the phosphopentomutase family. Requires Mn(2+) as cofactor.

It is found in the cytoplasm. It carries out the reaction 2-deoxy-alpha-D-ribose 1-phosphate = 2-deoxy-D-ribose 5-phosphate. It catalyses the reaction alpha-D-ribose 1-phosphate = D-ribose 5-phosphate. It functions in the pathway carbohydrate degradation; 2-deoxy-D-ribose 1-phosphate degradation; D-glyceraldehyde 3-phosphate and acetaldehyde from 2-deoxy-alpha-D-ribose 1-phosphate: step 1/2. In terms of biological role, isomerase that catalyzes the conversion of deoxy-ribose 1-phosphate (dRib-1-P) and ribose 1-phosphate (Rib-1-P) to deoxy-ribose 5-phosphate (dRib-5-P) and ribose 5-phosphate (Rib-5-P), respectively. The polypeptide is Phosphopentomutase (Aliivibrio fischeri (strain ATCC 700601 / ES114) (Vibrio fischeri)).